Consider the following 149-residue polypeptide: Protein FAM72A (149 aa).

This sequence belongs to the FAM72 family. In terms of assembly, interacts with UNG. May be up-regulated in malignant colon cancers, compared to normal colon and colon adenomas. Expression is also elevated in other common cancer types, including breast, lung, uterus, and ovary.

The protein localises to the cytoplasm. The protein resides in the mitochondrion. In terms of biological role, may play a role in the regulation of cellular reactive oxygen species metabolism. May participate in cell growth regulation. This is Protein FAM72A (FAM72A) from Homo sapiens (Human).